Reading from the N-terminus, the 282-residue chain is HTH-type transcriptional activator RhaR (282 aa).

One can recognise an HTH araC/xylS-type domain in the interval 179 to 277 (DKLITALANS…GMTPSQWRHL (99 aa)). 2 DNA-binding regions (H-T-H motif) span residues 196–217 (DAFCQQEQCSERVLRQQFRAQT) and 244–267 (ISEISMQCGFEDSNYFSVVFTRET).

Binds DNA as a dimer.

The protein resides in the cytoplasm. In terms of biological role, activates expression of the rhaSR operon in response to L-rhamnose. The chain is HTH-type transcriptional activator RhaR from Salmonella dublin (strain CT_02021853).